We begin with the raw amino-acid sequence, 427 residues long: Enolase 2 (427 aa).

Glutamine 165 serves as a coordination point for (2R)-2-phosphoglycerate. The active-site Proton donor is the glutamate 207. 3 residues coordinate Mg(2+): aspartate 244, glutamate 287, and aspartate 314. (2R)-2-phosphoglycerate-binding residues include lysine 339, arginine 368, serine 369, and lysine 390. Lysine 339 functions as the Proton acceptor in the catalytic mechanism.

This sequence belongs to the enolase family. Component of the RNA degradosome, a multiprotein complex involved in RNA processing and mRNA degradation. The cofactor is Mg(2+).

It is found in the cytoplasm. The protein localises to the secreted. It localises to the cell surface. The catalysed reaction is (2R)-2-phosphoglycerate = phosphoenolpyruvate + H2O. It participates in carbohydrate degradation; glycolysis; pyruvate from D-glyceraldehyde 3-phosphate: step 4/5. Functionally, catalyzes the reversible conversion of 2-phosphoglycerate (2-PG) into phosphoenolpyruvate (PEP). It is essential for the degradation of carbohydrates via glycolysis. The polypeptide is Enolase 2 (Pseudomonas syringae pv. syringae (strain B728a)).